We begin with the raw amino-acid sequence, 241 residues long: Large ribosomal subunit protein uL2 (241 aa).

The interval 200 to 241 is disordered; that stretch reads AVDHPHGGGNRQHPGRPTTISRHAPAGRKVGSIAAKRTGKRR.

It belongs to the universal ribosomal protein uL2 family. Part of the 50S ribosomal subunit. Forms a bridge to the 30S subunit in the 70S ribosome.

Functionally, one of the primary rRNA binding proteins. Required for association of the 30S and 50S subunits to form the 70S ribosome, for tRNA binding and peptide bond formation. It has been suggested to have peptidyltransferase activity; this is somewhat controversial. Makes several contacts with the 16S rRNA in the 70S ribosome. The polypeptide is Large ribosomal subunit protein uL2 (Methanosphaera stadtmanae (strain ATCC 43021 / DSM 3091 / JCM 11832 / MCB-3)).